Reading from the N-terminus, the 214-residue chain is 2-phospho-L-lactate guanylyltransferase (214 aa).

This sequence belongs to the CofC family. Homodimer.

It carries out the reaction (2S)-2-phospholactate + GTP + H(+) = (2S)-lactyl-2-diphospho-5'-guanosine + diphosphate. It functions in the pathway cofactor biosynthesis; coenzyme F420 biosynthesis. Guanylyltransferase that catalyzes the activation of (2S)-2-phospholactate (2-PL) as (2S)-lactyl-2-diphospho-5'-guanosine, via the condensation of 2-PL with GTP. It is involved in the biosynthesis of coenzyme F420, a hydride carrier cofactor. The chain is 2-phospho-L-lactate guanylyltransferase from Methanoregula boonei (strain DSM 21154 / JCM 14090 / 6A8).